Reading from the N-terminus, the 465-residue chain is Keratin, type I cytoskeletal 13 (465 aa).

Residues 1–28 (MNFTSFSITQGSRPQPPSTRGFSGNSFK) show a composition bias toward polar residues. Residues 1–47 (MNFTSFSITQGSRPQPPSTRGFSGNSFKSDLIPQSRRSHSVYGTPGS) form a disordered region. The tract at residues 1 to 98 (MNFTSFSITQ…SGGSDLLLGT (98 aa)) is head. The segment at 99-135 (SGKEAMQNLNDRLASYLEKVRSLEERNRELEQKIREW) is coil 1A. The 313-residue stretch at 100–412 (GKEAMQNLND…ILLEGDEGKF (313 aa)) folds into the IF rod domain. Residues 136 to 154 (YEKQGAGTKTKDFSHYFKI) form a linker 1 region. Residues 155-246 (IADLQKQIHD…KSHDEEMKAL (92 aa)) are coil 1B. Residues 247–269 (RSQLGGQVNVEVDAAPAEDLTKK) form a linker 12 region. Residues 270–408 (LERMRQQYEQ…RTYRILLEGD (139 aa)) are coil 2. Residues 409–465 (EGKFQTSPHHPSIVTKQTETVVTPVVITNVKTVVEEIIDGKIVSKKEYPGPPEKLMI) form a tail region.

It belongs to the intermediate filament family. In terms of assembly, heterotetramer of two type I and two type II keratins. Expressed in skin.

Type 1 keratin. May maintain oral mucosal cell homeostasis and tissue organization in response to mechanical stress. The polypeptide is Keratin, type I cytoskeletal 13 (KRT13) (Protopterus aethiopicus (Marbled lungfish)).